The sequence spans 554 residues: Glutamine--tRNA ligase (554 aa).

The short motif at Pro34–His44 is the 'HIGH' region element. Residues Glu35–Asn37 and His41–Ser47 contribute to the ATP site. Residues Asp67 and Tyr212 each coordinate L-glutamine. Residues Thr231, Arg261 to Leu262, and Met269 to Lys271 each bind ATP. Residues Val268–Arg272 carry the 'KMSKS' region motif. The interval Thr317–Glu324 is interaction with tRNA.

This sequence belongs to the class-I aminoacyl-tRNA synthetase family. In terms of assembly, monomer.

It localises to the cytoplasm. It catalyses the reaction tRNA(Gln) + L-glutamine + ATP = L-glutaminyl-tRNA(Gln) + AMP + diphosphate. The protein is Glutamine--tRNA ligase of Escherichia coli O7:K1 (strain IAI39 / ExPEC).